We begin with the raw amino-acid sequence, 112 residues long: Protein Churchill (112 aa).

Zn(2+) contacts are provided by C2, C5, C30, C33, H59, C61, C64, H66, H71, C88, and C91.

It belongs to the Churchill family.

Transcriptional activator that mediates FGF signaling during neural development. Plays a role in the regulation of cell movement. Does not bind DNA by itself. This Mus musculus (Mouse) protein is Protein Churchill (Churc1).